The following is a 165-amino-acid chain: Putative glycine-rich cell wall structural protein 1 (165 aa).

Residues 1–23 (MARKVIALAFLLLLTISLSKSNA) form the signal peptide. R2; Tyr-rich repeat units follow at residues 56-62 (GYGYGYG) and 93-99 (GYGYGYG). The segment at 105-125 (AQGQGSGGGGGGGGGGGGGGS) is disordered. Residues 132 to 138 (GYGYGYG) form an R2; Tyr-rich repeat. Residues 146–165 (GGGGGGGGGGGGSGYVGKHE) form a disordered region.

Its subcellular location is the secreted. The protein resides in the cell wall. Responsible for plasticity of the cell wall. In Oryza sativa subsp. indica (Rice), this protein is Putative glycine-rich cell wall structural protein 1 (GRP-1).